Here is a 127-residue protein sequence, read N- to C-terminus: MIPSFKSTTQARGALAEDRALAHLQRHGLQPVVRNYRCKGGEIDLVMRAPDGTLVFIEVRQRSASAFGGAAASVTPAKQRRVVLAALHYLSTLAQQPPCRFDVVALAPGRLEWLQHAFDLDTAGEAG.

The protein belongs to the UPF0102 family.

This Cupriavidus pinatubonensis (strain JMP 134 / LMG 1197) (Cupriavidus necator (strain JMP 134)) protein is UPF0102 protein Reut_A3265.